Reading from the N-terminus, the 237-residue chain is Methylosome subunit pICln (237 aa).

Ser-2 is modified (N-acetylserine). Phosphoserine is present on residues Ser-102, Ser-144, Ser-193, Ser-195, Ser-198, and Ser-210. The segment at 135-159 (LHPDPEDEDSDDYDGEEYDVEAHEQ) is disordered. The segment covering 139-153 (PEDEDSDDYDGEEYD) has biased composition (acidic residues). Thr-223 bears the Phosphothreonine mark.

It belongs to the pICln (TC 1.A.47) family. In terms of assembly, component of the methylosome, a 20S complex containing at least PRMT5/SKB1, WDR77/MEP50 and CLNS1A/pICln. May mediate SNRPD1 and SNRPD3 methylation. Forms a 6S pICln-Sm complex composed of CLNS1A/pICln, SNRPD1, SNRPD2, SNRPE, SNRPF and SNRPG; ring-like structure where CLNS1A/pICln mimics additional Sm proteins and which is unable to assemble into the core snRNP. Interacts with LSM10 and LSM11.

It localises to the cytoplasm. Its subcellular location is the cytosol. It is found in the nucleus. The protein resides in the cytoskeleton. In terms of biological role, involved in both the assembly of spliceosomal snRNPs and the methylation of Sm proteins. Chaperone that regulates the assembly of spliceosomal U1, U2, U4 and U5 small nuclear ribonucleoproteins (snRNPs), the building blocks of the spliceosome, and thereby plays an important role in the splicing of cellular pre-mRNAs. Most spliceosomal snRNPs contain a common set of Sm proteins SNRPB, SNRPD1, SNRPD2, SNRPD3, SNRPE, SNRPF and SNRPG that assemble in a heptameric protein ring on the Sm site of the small nuclear RNA to form the core snRNP (Sm core). In the cytosol, the Sm proteins SNRPD1, SNRPD2, SNRPE, SNRPF and SNRPG are trapped in an inactive 6S pICln-Sm complex by the chaperone CLNS1A that controls the assembly of the core snRNP. Dissociation by the SMN complex of CLNS1A from the trapped Sm proteins and their transfer to an SMN-Sm complex triggers the assembly of core snRNPs and their transport to the nucleus. This Homo sapiens (Human) protein is Methylosome subunit pICln (CLNS1A).